The sequence spans 475 residues: Lipoprotein lipase (475 aa).

A signal peptide spans 1-27 (MESKALLLLALAVWLQSLTASRGGVAA). The interaction with GPIHBP1 stretch occupies residues 32–53 (RDFIDIESKFALRTPEDTAEDT). Cys-54 and Cys-67 are disulfide-bonded. Asn-70 is a glycosylation site (N-linked (GlcNAc...) asparagine). At Tyr-121 the chain carries 3'-nitrotyrosine. Ser-159 acts as the Nucleophile in catalysis. The active-site Charge relay system is the Asp-183. Position 191 is a 3'-nitrotyrosine (Tyr-191). Ala-194, Arg-197, Ser-199, and Asp-202 together coordinate Ca(2+). A disulfide bond links Cys-243 and Cys-266. The segment at 243-266 (CNIGEAIRVIAERGLGDVDQLVKC) is essential for determining substrate specificity. His-268 serves as the catalytic Charge relay system. Disulfide bonds link Cys-291/Cys-310 and Cys-302/Cys-305. Residues 341–464 (FHYQVKIHFS…KGKAPAVFVK (124 aa)) form the PLAT domain. Tyr-343 is modified (3'-nitrotyrosine). Residue Asn-386 is glycosylated (N-linked (GlcNAc...) asparagine). The important for interaction with lipoprotein particles stretch occupies residues 417 to 421 (WSDWW). The interval 430–434 (KIRVK) is important for heparin binding. Residues 443–467 (IFCSREKVSHLQKGKAPAVFVKCHD) are interaction with GPIHBP1. Cys-445 and Cys-465 are oxidised to a cystine.

It belongs to the AB hydrolase superfamily. Lipase family. Homodimer. Interacts with GPIHBP1 with 1:1 stoichiometry. Interacts with APOC2; the interaction activates LPL activity in the presence of lipids. Interaction with heparan sulfate proteoglycans is required to protect LPL against loss of activity. Associates with lipoprotein particles in blood plasma. Interacts with LMF1 and SEL1L; interaction with SEL1L is required to prevent aggregation of newly synthesized LPL in the endoplasmic reticulum (ER), and for normal export of LPL from the ER to the extracellular space. Interacts with SORL1; SORL1 acts as a sorting receptor, promoting LPL localization to endosomes and later to lysosomes, leading to degradation of newly synthesized LPL. In terms of processing, tyrosine nitration after lipopolysaccharide (LPS) challenge down-regulates the lipase activity. In terms of tissue distribution, highest levels in the spinal cord.

The protein localises to the cell membrane. Its subcellular location is the secreted. It localises to the extracellular space. The protein resides in the extracellular matrix. It catalyses the reaction a triacylglycerol + H2O = a diacylglycerol + a fatty acid + H(+). The catalysed reaction is a 1,2-diacyl-sn-glycero-3-phosphocholine + H2O = a 2-acyl-sn-glycero-3-phosphocholine + a fatty acid + H(+). The enzyme catalyses 1,2,3-tri-(9Z-octadecenoyl)-glycerol + H2O = di-(9Z)-octadecenoylglycerol + (9Z)-octadecenoate + H(+). It carries out the reaction 1,2-di-(9Z-octadecenoyl)-sn-glycero-3-phosphocholine + H2O = (9Z-octadecenoyl)-sn-glycero-3-phosphocholine + (9Z)-octadecenoate + H(+). It catalyses the reaction 1,2,3-tributanoylglycerol + H2O = dibutanoylglycerol + butanoate + H(+). The catalysed reaction is 1,2-dihexadecanoyl-sn-glycero-3-phosphocholine + H2O = hexadecanoyl-sn-glycero-3-phosphocholine + hexadecanoate + H(+). Its activity is regulated as follows. The apolipoprotein APOC2 acts as a coactivator of LPL activity. Ca(2+) binding promotes protein stability and formation of the active homodimer. Interaction with GPIHBP1 protects LPL against inactivation by ANGPTL4. Its function is as follows. Key enzyme in triglyceride metabolism. Catalyzes the hydrolysis of triglycerides from circulating chylomicrons and very low density lipoproteins (VLDL), and thereby plays an important role in lipid clearance from the blood stream, lipid utilization and storage. Although it has both phospholipase and triglyceride lipase activities it is primarily a triglyceride lipase with low but detectable phospholipase activity. Mediates margination of triglyceride-rich lipoprotein particles in capillaries. Recruited to its site of action on the luminal surface of vascular endothelium by binding to GPIHBP1 and cell surface heparan sulfate proteoglycans. In Papio anubis (Olive baboon), this protein is Lipoprotein lipase (LPL).